We begin with the raw amino-acid sequence, 531 residues long: Acyl-CoA ligase azaF (531 aa).

AMP is bound at residue 188-199 (RLFSSGTTGLPK). An AMP-binding region spans residues 449–525 (EVEGVLRNHP…DAIPRNASGK (77 aa)).

The protein belongs to the ATP-dependent AMP-binding enzyme family.

The protein operates within secondary metabolite biosynthesis. Its function is as follows. Acyl-CoA ligase; part of the gene cluster that mediates the biosynthesis of azaphilones, a class of fungal metabolites characterized by a highly oxygenated pyrano-quinone bicyclic core and exhibiting a broad range of bioactivities. In the first step, the non-reducing polyketide synthase azaA forms the hexaketide precursor from successive condensations of five malonyl-CoA units, presumably with a simple acetyl-CoA starter unit. The reactive polyketide chain then undergoes a PT-mediated C2-C7 cyclization to afford the aromatic ring and is eventually released as an aldehyde through the R-domain. The putative ketoreductase azaE is proposed to catalyze the reduction of the terminal ketone resulting in the early culture product FK17-P2a. The monooxygenase azaH was demonstrated to be the only enzyme required to convert FK17-P2a to azanigerone E. AzaH first hydroxylates the benzaldehyde intermediate FK17-P2a at C4, which triggers the formation of the pyran-ring to afford azanigerone E. In parallel, the 2,4-dimethylhexanoyl chain is synthesized by the HR-PKS azaB and is proposed to be transferred to the C4-hydroxyl of azanigerone E by the acyltransferase azaD directly from the ACP domain of azaB. Alternatively, the 2,4-dimethyl-hexanoyl chain may be offloaded from the HR-PKS as a carboxylic acid and converted to an acyl-CoA by azaF. The resulting acyl-CoA molecule could then be taken up as a substrate by AzaD to form azanigerone B. To yield the carboxylic acid substituent in azanigerone A, the hydroxypropyl side chain of azanigerone B would need to undergo a C-C oxidative cleavage catalyzed by cytochrome P450 AzaI. AzaI is proposed to act on a vicinal diol that leads to a C-C bond scission either through an alkoxyradical intermediate or a peroxy complex. In the biosynthesis of azanigerone A, azanigerone B first undergoes hydroxylation at C10, possibly catalyzed by one of the two FAD-dependent monooxygenases encoded in the cluster, azaG or azaL, resulting in the vicinal diol azanigerone C. Oxidative cleavage of azanigerone C by azaI would yield the corresponding aldehyde derivative of azanigerone A. Finally, the dehydrogenase azaJ is proposed to convert the aldehyde functional group into the carboxylic acid, completing the conversion from azanigerone B to azanigerone A. Alternatively, the oxidation of aldehyde to carboxylic acid may be catalyzed by the same P450 enzyme azaI via consecutive oxidation or by endogenous alcohol dehydrogenase. The protein is Acyl-CoA ligase azaF of Aspergillus niger (strain ATCC 1015 / CBS 113.46 / FGSC A1144 / LSHB Ac4 / NCTC 3858a / NRRL 328 / USDA 3528.7).